Reading from the N-terminus, the 151-residue chain is CNSDIVIRAKVVGKKLVKEGPFGTMVYTVKQMKMYRGFTKMPHVQYIHTEASESLCGLKLEVNKYQYLLTGRVYDGKVYTGLCNFVERWDQLTLSQRKGLNYRYHLGCNCKIKSCYYLPCFVTSKNECLWTDMLSNFGYPGYQSKHYACIR.

One can recognise an NTR domain in the interval 1–108; the sequence is CNSDIVIRAK…GLNYRYHLGC (108 aa). 3 disulfides stabilise this stretch: Cys-1-Cys-108, Cys-115-Cys-120, and Cys-128-Cys-149. Residues 53–54 are involved in metalloproteinase-binding; it reads ES. The segment at 71–151 is mediates interaction with EFEMP1; the sequence is GRVYDGKVYT…YQSKHYACIR (81 aa).

This sequence belongs to the protease inhibitor I35 (TIMP) family. In terms of assembly, interacts with EFEMP1.

The protein resides in the secreted. It is found in the extracellular space. The protein localises to the extracellular matrix. Complexes with metalloproteinases (such as collagenases) and irreversibly inactivates them by binding to their catalytic zinc cofactor. May form part of a tissue-specific acute response to remodeling stimuli. This is Metalloproteinase inhibitor 3 (TIMP3) from Oryctolagus cuniculus (Rabbit).